The following is a 314-amino-acid chain: Vomeronasal type-1 receptor 95 (314 aa).

At 1–18 the chain is on the extracellular side; that stretch reads MNKDNTLYCSAYRIAFFS. The chain crosses the membrane as a helical span at residues 19-39; sequence EIGIGISANSCLLLFHTFMFI. Topologically, residues 40–48 are cytoplasmic; the sequence is RGHRPRLTD. The chain crosses the membrane as a helical span at residues 49–69; it reads LPIGLVALIHLVMLLLAAYIT. Residues 70-88 are Extracellular-facing; sequence EDFFMSSGGWDDITCKLFI. A disulfide bridge links cysteine 84 with cysteine 171. Residues 89-113 form a helical membrane-spanning segment; the sequence is FLHRFFRSLSVCDTCMLSVFQAIIL. Topologically, residues 114–133 are cytoplasmic; the sequence is CPQSSHLAKFKLNSPHHLSC. A helical membrane pass occupies residues 134–154; the sequence is FFIFMSIFYTSISSHILIAAI. The Extracellular portion of the chain corresponds to 155–186; that stretch reads ATQNLTSVNLIYITKSCSFLPMSSSMQRTFST. Residue asparagine 158 is glycosylated (N-linked (GlcNAc...) asparagine). The helical transmembrane segment at 187–207 threads the bilayer; sequence LLAFRNVFLIGLMGLSTCYMA. Residues 208–235 lie on the Cytoplasmic side of the membrane; the sequence is TLLCRHKTRSQQLQNSKLSPKATPEQRA. Residues 236 to 256 form a helical membrane-spanning segment; sequence IWTILMLMSFFLIISTFDSIM. The Extracellular segment spans residues 257–268; the sequence is TYSRTIFQGNQS. Asparagine 266 carries N-linked (GlcNAc...) asparagine glycosylation. Residues 269–289 form a helical membrane-spanning segment; that stretch reads LYCVQIPVAHGYAAFSPLLVL. Residues 290–314 lie on the Cytoplasmic side of the membrane; the sequence is NNEKRLTSLMISMYDRIVRLESLCS.

The protein belongs to the G-protein coupled receptor 1 family.

Its subcellular location is the cell membrane. Functionally, putative pheromone receptor implicated in the regulation of social as well as reproductive behavior. The protein is Vomeronasal type-1 receptor 95 (Vom1r95) of Rattus norvegicus (Rat).